The chain runs to 470 residues: Macrophage metalloelastase (470 aa).

Positions 1–16 (MKFLLILLLQATASGA) are cleaved as a signal peptide. A propeptide spans 17-105 (LPLNSSTSLE…DVHHFREMPG (89 aa)) (activation peptide). An N-linked (GlcNAc...) asparagine glycan is attached at N20. A Cysteine switch motif is present at residues 90–97 (PRCGVPDV). Residue C92 coordinates Zn(2+). The Ca(2+) site is built by D124 and D158. Zn(2+) contacts are provided by H168 and D170. Residues D175, G176, G178, and I180 each coordinate Ca(2+). Residue H183 coordinates Zn(2+). Ca(2+) is bound by residues G190, G192, and D194. H196 is a binding site for Zn(2+). 3 residues coordinate Ca(2+): D198, E199, and E201. H218 is a Zn(2+) binding site. The active site involves E219. Zn(2+)-binding residues include H222 and H228. Hemopexin repeat units lie at residues 279 to 328 (PALC…WPTL), 329 to 375 (PSGI…GFPN), 377 to 425 (VKKI…FQGI), and 426 to 470 (GPKI…WFGC). A disulfide bridge connects residues C282 and C470. N285 carries an N-linked (GlcNAc...) asparagine glycan. Residues D289, E333, D381, and D430 each coordinate Ca(2+).

The protein belongs to the peptidase M10A family. Ca(2+) serves as cofactor. Requires Zn(2+) as cofactor. As to expression, found in alveolar macrophages but not in peripheral blood monocytes.

It is found in the secreted. Its subcellular location is the extracellular space. The protein resides in the extracellular matrix. It catalyses the reaction Hydrolysis of soluble and insoluble elastin. Specific cleavages are also produced at 14-Ala-|-Leu-15 and 16-Tyr-|-Leu-17 in the B chain of insulin.. Its function is as follows. May be involved in tissue injury and remodeling. Has significant elastolytic activity. Can accept large and small amino acids at the P1' site, but has a preference for leucine. Aromatic or hydrophobic residues are preferred at the P1 site, with small hydrophobic residues (preferably alanine) occupying P3. The polypeptide is Macrophage metalloelastase (MMP12) (Homo sapiens (Human)).